A 320-amino-acid polypeptide reads, in one-letter code: Ferrochelatase (320 aa).

Residues His194 and Glu275 each coordinate Fe cation.

This sequence belongs to the ferrochelatase family. As to quaternary structure, monomer.

The protein resides in the cytoplasm. The enzyme catalyses heme b + 2 H(+) = protoporphyrin IX + Fe(2+). Its pathway is porphyrin-containing compound metabolism; protoheme biosynthesis; protoheme from protoporphyrin-IX: step 1/1. Catalyzes the ferrous insertion into protoporphyrin IX. The protein is Ferrochelatase of Salmonella dublin (strain CT_02021853).